The following is a 439-amino-acid chain: 3-phosphoshikimate 1-carboxyvinyltransferase (439 aa).

3-phosphoshikimate contacts are provided by Lys29 and Arg34. Lys29 serves as a coordination point for phosphoenolpyruvate. Positions 99 and 128 each coordinate phosphoenolpyruvate. The 3-phosphoshikimate site is built by Ser171, Ser172, Gln173, Ser199, Asp316, and Lys343. Gln173 is a phosphoenolpyruvate binding site. Residue Asp316 is the Proton acceptor of the active site. The phosphoenolpyruvate site is built by Arg347, Arg390, and Lys416.

Belongs to the EPSP synthase family. As to quaternary structure, monomer.

Its subcellular location is the cytoplasm. The catalysed reaction is 3-phosphoshikimate + phosphoenolpyruvate = 5-O-(1-carboxyvinyl)-3-phosphoshikimate + phosphate. Its pathway is metabolic intermediate biosynthesis; chorismate biosynthesis; chorismate from D-erythrose 4-phosphate and phosphoenolpyruvate: step 6/7. In terms of biological role, catalyzes the transfer of the enolpyruvyl moiety of phosphoenolpyruvate (PEP) to the 5-hydroxyl of shikimate-3-phosphate (S3P) to produce enolpyruvyl shikimate-3-phosphate and inorganic phosphate. This Deinococcus radiodurans (strain ATCC 13939 / DSM 20539 / JCM 16871 / CCUG 27074 / LMG 4051 / NBRC 15346 / NCIMB 9279 / VKM B-1422 / R1) protein is 3-phosphoshikimate 1-carboxyvinyltransferase.